The primary structure comprises 374 residues: DNA replication and repair protein RecF (374 aa).

Residue 34-41 coordinates ATP; that stretch reads GNNGSGKT.

Belongs to the RecF family.

The protein localises to the cytoplasm. Functionally, the RecF protein is involved in DNA metabolism; it is required for DNA replication and normal SOS inducibility. RecF binds preferentially to single-stranded, linear DNA. It also seems to bind ATP. This is DNA replication and repair protein RecF from Allorhizobium ampelinum (strain ATCC BAA-846 / DSM 112012 / S4) (Agrobacterium vitis (strain S4)).